Consider the following 367-residue polypeptide: DNA replication and repair protein RecF (367 aa).

30–37 (GNNGEGKT) is an ATP binding site.

This sequence belongs to the RecF family.

The protein resides in the cytoplasm. In terms of biological role, the RecF protein is involved in DNA metabolism; it is required for DNA replication and normal SOS inducibility. RecF binds preferentially to single-stranded, linear DNA. It also seems to bind ATP. The sequence is that of DNA replication and repair protein RecF from Leptospira biflexa serovar Patoc (strain Patoc 1 / Ames).